An 888-amino-acid chain; its full sequence is G-protein coupled receptor family C group 6 member A (888 aa).

The N-terminal stretch at 1–15 (MALLMTCFVIVFAAS) is a signal peptide. At 16–568 (QPCQTPDDLV…KEMEYLDSLA (553 aa)) the chain is on the extracellular side. N-linked (GlcNAc...) asparagine glycosylation is found at asparagine 251, asparagine 322, asparagine 532, and asparagine 544. A helical transmembrane segment spans residues 569-589 (ILLLALSLLGILFVLAIGIIF). Topologically, residues 590–604 (TRNLNTPVVKSSGEL) are cytoplasmic. Residues 605-625 (MVRYVILFCHFLNFAGTGFFI) traverse the membrane as a helical segment. The Extracellular segment spans residues 626–641 (REPQSFTCKTRQTLIC). Residues 642-662 (MSFTLCISYILMKSLKILLAF) form a helical membrane-spanning segment. Residues 663–676 (SSKLQNFLKCFYKP) lie on the Cytoplasmic side of the membrane. A helical transmembrane segment spans residues 677–697 (IPIIFTCTGIVVVCTLLIFAA). The Extracellular portion of the chain corresponds to 698–718 (PAVGQNVSLPRVIIFECEEGS). Residues 719-739 (ILAFGSMLGYAAILAFMCFIC) traverse the membrane as a helical segment. The Cytoplasmic portion of the chain corresponds to 740–754 (AFKGRKFPENYNEAK). A helical membrane pass occupies residues 755–775 (FITFGMLIYFIAWITFIPIYT). At 776 to 779 (FGKY) the chain is on the extracellular side. Residues 780–800 (MLVVEIIIILISNYGICCMFF) form a helical membrane-spanning segment. Topologically, residues 801-888 (PKCYVILSKQ…ALPPKRISSI (88 aa)) are cytoplasmic.

Belongs to the G-protein coupled receptor 3 family. As to quaternary structure, homodimer; disulfide-linked.

Its subcellular location is the cell membrane. Functionally, receptor activated by multiple ligands, including osteocalcin (BGLAP), basic amino acids, and various cations. Activated by amino acids with a preference for basic amino acids such as L-Lys, L-Arg and L-ornithine but also by small and polar amino acids. The L-alpha amino acids respond is augmented by divalent cations Ca(2+) and Mg(2+). Seems to act through a G(q)/G(11) and G(i)-coupled pathway. Regulates testosterone production by acting as a ligand for uncarboxylated osteocalcin hormone: osteocalcin-binding at the surface of Leydig cells initiates a signaling response that promotes the expression of enzymes required for testosterone synthesis in a CREB-dependent manner. Mediates the non-genomic effects of androgens in multiple tissue. May coordinate nutritional and hormonal anabolic signals through the sensing of extracellular amino acids, osteocalcin, divalent ions and its responsiveness to anabolic steroids. The chain is G-protein coupled receptor family C group 6 member A (GPRC6A) from Bos taurus (Bovine).